The following is a 325-amino-acid chain: MNWEVVKLRLNMALATLGITLLGFALALAVADYAFGAQFGVGLILSILIFIFFLNIIQWLFGPYMINWAYRTVEVTPTDPVYGWLYSTVAEVAKYNGFREVPKVYIADVPFPNAFAYGSPIAGKRIAFTLPILKLLNRDEIMAVAGHELGHLKHRDVELLMAVGLIPALIYYLGWWLFWGGLFSGGGNGRGNNGGLVFLLGIIMMAVSFVFQLLVLSLNRMREAYADVNSALTVPGGKENLQLALAKLTLSMDPEALERFKKKSTTNQMASMLFFTNAIEEVPTWNAKELVEIWKTTKVPWYADIFMDHPHPAKRIQLLDKVSKY.

Transmembrane regions (helical) follow at residues L10–V30 and V41–F61. Zn(2+) is bound at residue H147. Residue E148 is part of the active site. Residue H151 participates in Zn(2+) binding. The next 2 helical transmembrane spans lie at L159–W179 and L196–L216. E223 contacts Zn(2+).

Belongs to the peptidase M48B family. The cofactor is Zn(2+).

It is found in the cell membrane. The protein is Protease HtpX homolog 2 of Saccharolobus solfataricus (strain ATCC 35092 / DSM 1617 / JCM 11322 / P2) (Sulfolobus solfataricus).